Consider the following 494-residue polypeptide: Metal cation symporter ZIP14 (494 aa).

The first 34 residues, 1 to 34 (MTLRRASGCRQLTLTIGLALTLGLLQWPIGDVRG), serve as a signal peptide directing secretion. The Extracellular portion of the chain corresponds to 35 to 152 (QDGASPAQVL…PTEAEVWGYG (118 aa)). A helical membrane pass occupies residues 153–173 (LLCVTVISLCSLVGASVVPFM). Residues 174-181 (RKTFYKRL) are Cytoplasmic-facing. A helical membrane pass occupies residues 182 to 202 (LLYFIALAIGTLYSNALFQLI). The Extracellular portion of the chain corresponds to 203–219 (PEAFGFDPMEDYYVPKS). The helical transmembrane segment at 220–240 (AVVFGGFYLFFFTEKILKMIL) threads the bilayer. The Cytoplasmic portion of the chain corresponds to 241–397 (KPKDTGGHGH…LLNAGMSIQQ (157 aa)). The HHHGHXHX-motif signature appears at 248-255 (HGHGHSHF). An XEXPHE-motif motif is present at residues 376–381 (EEFPHE). A helical transmembrane segment spans residues 398-418 (ALFFNFLSACCCYLGMGFGIL). The Extracellular portion of the chain corresponds to 419 to 426 (AGNNFSPN). Residues 427–447 (WIFALAGGMFLYIALADMFPE) form a helical membrane-spanning segment. The Cytoplasmic segment spans residues 448 to 462 (MNEVSREEEEAGGSG). Residues 463–483 (FLLTFALQNAGLLTGFAIMLV) form a helical membrane-spanning segment. At 484-494 (LTIYSGQIQLG) the chain is on the extracellular side.

Belongs to the ZIP transporter (TC 2.A.5) family. As to quaternary structure, homotrimer.

It localises to the cell membrane. It is found in the apical cell membrane. The protein localises to the basolateral cell membrane. Its subcellular location is the early endosome membrane. The protein resides in the late endosome membrane. It localises to the lysosome membrane. The catalysed reaction is Zn(2+)(out) + 2 hydrogencarbonate(out) = Zn(2+)(in) + 2 hydrogencarbonate(in). It carries out the reaction Mn(2+)(out) + 2 hydrogencarbonate(out) = Mn(2+)(in) + 2 hydrogencarbonate(in). It catalyses the reaction Fe(2+)(out) + 2 hydrogencarbonate(out) = Fe(2+)(in) + 2 hydrogencarbonate(in). The enzyme catalyses Cd(2+)(out) + 2 hydrogencarbonate(out) = Cd(2+)(in) + 2 hydrogencarbonate(in). In terms of biological role, broad-scope metal ion transporter with a preference for zinc uptake. Also mediates cellular uptake of nontransferrin-bound iron. Electroneutral transporter of the plasma membrane mediating the cellular uptake of the divalent metal cations zinc, manganese and iron that are important for tissue homeostasis, metabolism, development and immunity. Functions as an energy-dependent symporter, transporting through the membranes an electroneutral complex composed of a divalent metal cation and two bicarbonate anions. Beside these endogenous cellular substrates, can also import cadmium a non-essential metal which is cytotoxic and carcinogenic. This is Metal cation symporter ZIP14 from Danio rerio (Zebrafish).